The primary structure comprises 421 residues: Medium-chain specific acyl-CoA dehydrogenase, mitochondrial (421 aa).

The transit peptide at M1–T25 directs the protein to the mitochondrion. N6-acetyllysine; alternate is present on K69. K69 is modified (N6-succinyllysine; alternate). Residue Y158–S167 participates in FAD binding. Residue S167 participates in octanoyl-CoA binding. An N6-succinyllysine modification is found at K179. W191–T193 is an FAD binding site. N6-acetyllysine; alternate occurs at positions 212, 217, 259, and 271. N6-succinyllysine; alternate is present on residues K212, K217, K259, and K271. D278 is a binding site for octanoyl-CoA. K279 is modified (N6-acetyllysine). R281 is a binding site for octanoyl-CoA. K301 carries the post-translational modification N6-acetyllysine. Residues R306 to T308 and H316 to Q317 contribute to the FAD site. T351 bears the Phosphothreonine mark. Residues Q374–G378 and E401–Q405 each bind FAD. E401 is an octanoyl-CoA binding site. E401 acts as the Proton acceptor in catalysis.

The protein belongs to the acyl-CoA dehydrogenase family. Homotetramer. Interacts with the heterodimeric electron transfer flavoprotein ETF. It depends on FAD as a cofactor. In terms of processing, acetylated. Could occur at proximity of the cofactor-binding sites and reduce the catalytic activity. Could be deacetylated by SIRT3.

Its subcellular location is the mitochondrion matrix. It catalyses the reaction a medium-chain 2,3-saturated fatty acyl-CoA + oxidized [electron-transfer flavoprotein] + H(+) = a medium-chain (2E)-enoyl-CoA + reduced [electron-transfer flavoprotein]. It carries out the reaction pentanoyl-CoA + oxidized [electron-transfer flavoprotein] + H(+) = (2E)-pentenoyl-CoA + reduced [electron-transfer flavoprotein]. The catalysed reaction is hexanoyl-CoA + oxidized [electron-transfer flavoprotein] + H(+) = (2E)-hexenoyl-CoA + reduced [electron-transfer flavoprotein]. The enzyme catalyses octanoyl-CoA + oxidized [electron-transfer flavoprotein] + H(+) = (2E)-octenoyl-CoA + reduced [electron-transfer flavoprotein]. It catalyses the reaction decanoyl-CoA + oxidized [electron-transfer flavoprotein] + H(+) = (2E)-decenoyl-CoA + reduced [electron-transfer flavoprotein]. It carries out the reaction dodecanoyl-CoA + oxidized [electron-transfer flavoprotein] + H(+) = (2E)-dodecenoyl-CoA + reduced [electron-transfer flavoprotein]. The catalysed reaction is tetradecanoyl-CoA + oxidized [electron-transfer flavoprotein] + H(+) = (2E)-tetradecenoyl-CoA + reduced [electron-transfer flavoprotein]. The enzyme catalyses oxidized [electron-transfer flavoprotein] + hexadecanoyl-CoA + H(+) = (2E)-hexadecenoyl-CoA + reduced [electron-transfer flavoprotein]. It participates in lipid metabolism; mitochondrial fatty acid beta-oxidation. In terms of biological role, medium-chain specific acyl-CoA dehydrogenase is one of the acyl-CoA dehydrogenases that catalyze the first step of mitochondrial fatty acid beta-oxidation, an aerobic process breaking down fatty acids into acetyl-CoA and allowing the production of energy from fats. The first step of fatty acid beta-oxidation consists in the removal of one hydrogen from C-2 and C-3 of the straight-chain fatty acyl-CoA thioester, resulting in the formation of trans-2-enoyl-CoA. Electron transfer flavoprotein (ETF) is the electron acceptor that transfers electrons to the main mitochondrial respiratory chain via ETF-ubiquinone oxidoreductase (ETF dehydrogenase). Among the different mitochondrial acyl-CoA dehydrogenases, medium-chain specific acyl-CoA dehydrogenase acts specifically on acyl-CoAs with saturated 6 to 12 carbons long primary chains. This chain is Medium-chain specific acyl-CoA dehydrogenase, mitochondrial, found in Homo sapiens (Human).